A 229-amino-acid polypeptide reads, in one-letter code: Ribosomal RNA large subunit methyltransferase E (229 aa).

The disordered stretch occupies residues 1 to 20 (MSRAGNGGRQRIKTAKGRSA). 5 residues coordinate S-adenosyl-L-methionine: Gly-75, Trp-77, Asp-94, Asp-110, and Asp-134. Lys-174 (proton acceptor) is an active-site residue.

It belongs to the class I-like SAM-binding methyltransferase superfamily. RNA methyltransferase RlmE family.

It is found in the cytoplasm. It catalyses the reaction uridine(2552) in 23S rRNA + S-adenosyl-L-methionine = 2'-O-methyluridine(2552) in 23S rRNA + S-adenosyl-L-homocysteine + H(+). Specifically methylates the uridine in position 2552 of 23S rRNA at the 2'-O position of the ribose in the fully assembled 50S ribosomal subunit. This is Ribosomal RNA large subunit methyltransferase E from Rhizorhabdus wittichii (strain DSM 6014 / CCUG 31198 / JCM 15750 / NBRC 105917 / EY 4224 / RW1) (Sphingomonas wittichii).